A 230-amino-acid chain; its full sequence is NAD(P)H-quinone oxidoreductase subunit K, chloroplastic (230 aa).

Positions 43, 44, 108, and 139 each coordinate [4Fe-4S] cluster.

It belongs to the complex I 20 kDa subunit family. In terms of assembly, NDH is composed of at least 16 different subunits, 5 of which are encoded in the nucleus. It depends on [4Fe-4S] cluster as a cofactor.

It is found in the plastid. The protein localises to the chloroplast thylakoid membrane. The enzyme catalyses a plastoquinone + NADH + (n+1) H(+)(in) = a plastoquinol + NAD(+) + n H(+)(out). It catalyses the reaction a plastoquinone + NADPH + (n+1) H(+)(in) = a plastoquinol + NADP(+) + n H(+)(out). In terms of biological role, NDH shuttles electrons from NAD(P)H:plastoquinone, via FMN and iron-sulfur (Fe-S) centers, to quinones in the photosynthetic chain and possibly in a chloroplast respiratory chain. The immediate electron acceptor for the enzyme in this species is believed to be plastoquinone. Couples the redox reaction to proton translocation, and thus conserves the redox energy in a proton gradient. This Lotus japonicus (Lotus corniculatus var. japonicus) protein is NAD(P)H-quinone oxidoreductase subunit K, chloroplastic.